A 277-amino-acid chain; its full sequence is Small ribosomal subunit protein uS3 (277 aa).

The KH type-2 domain maps to 43–111 (IRQLMSTGME…QVQLNILEVK (69 aa)). The span at 218 to 228 (QQAAAAPSRGR) shows a compositional bias: low complexity. Residues 218 to 277 (QQAAAAPSRGRGASDRPGRPGGADRGDRRRRTDRPAAEAAPAAEAPAVEAAAPAVEGGQA) are disordered. Over residues 229–244 (GASDRPGRPGGADRGD) the composition is skewed to basic and acidic residues. Positions 254–277 (AEAAPAAEAPAVEAAAPAVEGGQA) are enriched in low complexity.

Belongs to the universal ribosomal protein uS3 family. In terms of assembly, part of the 30S ribosomal subunit. Forms a tight complex with proteins S10 and S14.

Its function is as follows. Binds the lower part of the 30S subunit head. Binds mRNA in the 70S ribosome, positioning it for translation. This Arthrobacter sp. (strain FB24) protein is Small ribosomal subunit protein uS3.